The primary structure comprises 251 residues: Small ribosomal subunit protein uS2 (251 aa).

The disordered stretch occupies residues 232–251 (LQTGEEEMAAAEGESEQVEA). A compositionally biased stretch (acidic residues) spans 235-251 (GEEEMAAAEGESEQVEA).

This sequence belongs to the universal ribosomal protein uS2 family.

The chain is Small ribosomal subunit protein uS2 from Geobacter metallireducens (strain ATCC 53774 / DSM 7210 / GS-15).